The primary structure comprises 219 residues: 2-C-methyl-D-erythritol 4-phosphate cytidylyltransferase (219 aa).

This sequence belongs to the IspD/TarI cytidylyltransferase family. IspD subfamily.

The catalysed reaction is 2-C-methyl-D-erythritol 4-phosphate + CTP + H(+) = 4-CDP-2-C-methyl-D-erythritol + diphosphate. Its pathway is isoprenoid biosynthesis; isopentenyl diphosphate biosynthesis via DXP pathway; isopentenyl diphosphate from 1-deoxy-D-xylulose 5-phosphate: step 2/6. In terms of biological role, catalyzes the formation of 4-diphosphocytidyl-2-C-methyl-D-erythritol from CTP and 2-C-methyl-D-erythritol 4-phosphate (MEP). This Chlamydia trachomatis serovar D (strain ATCC VR-885 / DSM 19411 / UW-3/Cx) protein is 2-C-methyl-D-erythritol 4-phosphate cytidylyltransferase.